Consider the following 133-residue polypeptide: Protein NrdI (133 aa).

It belongs to the NrdI family.

In terms of biological role, probably involved in ribonucleotide reductase function. This Cronobacter sakazakii (strain ATCC BAA-894) (Enterobacter sakazakii) protein is Protein NrdI.